The following is a 603-amino-acid chain: MAAESGELIGACEFMKDRLYFATLRNRPKSTINIHYFSIDEELVYENFYADFGPLNLAMVYRYCCKLNKKLKSYSLSRKKIVHYTSFDQRKRANAAFLIGAYAVIYLKKTPEEAYRALLSGSNPPYLPFRDASFGNCTYNLTVLDCLQGIRKGLQHGFFDFETFDAEEYEHYERVENGDFNWIVPGKFLAFSGPHPKSKIENGYPLHAPEAYFPYFKKNNVTTIVRLNKKIYEAKRFTDAGFEHYDLFFIDGSTPSDNIVRRFLNICENTEGAIAVHCKAGLGRTGTLIACYVMKHYRFTHAEIIAWIRICRPGSIIGPQQHFLKEKQASLWVQGDIFRSKLKNRPSSEGSITKIISTLDDMSIGANLSKLQSTERIGENNFEDEDMEIKNNVTQGDKLRALKSQRHPRSSPSCAFRSDDMKGHQRAMAQTFRLSSSPQPTMSTMKTSKVCLSPSVTAKKISRGSLSSGANIRSFSINSRLASSLGNLNAGTEEPETKKTTSLTKAAFIASPFTSFLNGSTQTPGRNYPELNNNQYTRSSNSNSSSSSSGLGGNLNSSPVPQSAKPEEHTTILRPSFPGSLSSSSVRFLSRSIPSLQSEYVHY.

Residues 7 to 162 (ELIGACEFMK…GLQHGFFDFE (156 aa)) form an a region. The tract at residues 163 to 176 (TFDAEEYEHYERVE) is linker. Residues 177-343 (NGDFNWIVPG…QGDIFRSKLK (167 aa)) form a b region. Residues 179–336 (DFNWIVPGKF…KQASLWVQGD (158 aa)) enclose the Tyrosine-protein phosphatase domain. The Phosphocysteine intermediate role is filled by Cys-278. Phosphoserine is present on Ser-484. Polar residues predominate over residues 518–538 (NGSTQTPGRNYPELNNNQYTR). Positions 518 to 583 (NGSTQTPGRN…RPSFPGSLSS (66 aa)) are disordered. 2 stretches are compositionally biased toward low complexity: residues 539-558 (SSNS…LNSS) and 573-583 (LRPSFPGSLSS). Position 592 is a phosphoserine (Ser-592).

It belongs to the protein-tyrosine phosphatase family. Non-receptor class CDC14 subfamily. Interacts with KIF20A. Interaction is required to localize CDC14 to the midzone of the mitotic spindle. In terms of tissue distribution, expressed in the inner ear.

The protein localises to the nucleus. It localises to the cytoplasm. The protein resides in the cytoskeleton. Its subcellular location is the microtubule organizing center. It is found in the centrosome. The protein localises to the spindle. It localises to the cell projection. The protein resides in the kinocilium. Its subcellular location is the spindle pole. It is found in the stereocilium. The enzyme catalyses O-phospho-L-tyrosyl-[protein] + H2O = L-tyrosyl-[protein] + phosphate. The catalysed reaction is O-phospho-L-seryl-[protein] + H2O = L-seryl-[protein] + phosphate. It catalyses the reaction O-phospho-L-threonyl-[protein] + H2O = L-threonyl-[protein] + phosphate. Its function is as follows. Dual-specificity phosphatase. Required for centrosome separation and productive cytokinesis during cell division. Dephosphorylates SIRT2 around early anaphase. May dephosphorylate the APC subunit FZR1/CDH1, thereby promoting APC-FZR1 dependent degradation of mitotic cyclins and subsequent exit from mitosis. Required for normal hearing. The chain is Dual specificity protein phosphatase CDC14A (Cdc14a) from Mus musculus (Mouse).